Consider the following 791-residue polypeptide: uncharacterized protein (791 aa).

The next 4 membrane-spanning stretches (helical) occupy residues 104 to 124 (MWIL…FFLM), 131 to 151 (IAAI…YYII), 177 to 197 (ACLY…TLII), and 226 to 246 (WSGL…PSVL). An N-linked (GlcNAc...) asparagine glycan is attached at Asn265. Helical transmembrane passes span 274–294 (FFIV…IFPA), 309–329 (SAVL…PLTL), 346–366 (WATC…LPGL), 421–441 (FIIN…SFFL), 471–491 (VHWG…FAFT), 501–521 (SYGF…LSLI), 533–553 (AFFE…LLYF), and 583–603 (LVAA…SAVT). Asn621 is a glycosylation site (N-linked (GlcNAc...) asparagine). 3 helical membrane passes run 653-673 (FVMW…LLQI), 697-717 (SVTG…NYLI), and 733-753 (AAAM…CVVY). Asn759 carries an N-linked (GlcNAc...) asparagine glycan.

This sequence belongs to the oligopeptide OPT transporter family.

The protein localises to the membrane. This is an uncharacterized protein from Schizosaccharomyces pombe (strain 972 / ATCC 24843) (Fission yeast).